A 327-amino-acid chain; its full sequence is Tartrate-resistant acid phosphatase type 5 (327 aa).

Positions 1–22 (MDTWMVLLGLQILLLPLLAHCT) are cleaved as a signal peptide. Fe cation-binding residues include Asp35, Asp73, Tyr76, and Asn112. 2 N-linked (GlcNAc...) asparagine glycosylation sites follow: Asn118 and Asn149. Cys163 and Cys221 are joined by a disulfide. Fe cation is bound by residues His207, His242, and His244.

In terms of assembly, exists either as monomer or, after proteolytic processing, as a dimer of two chains linked by disulfide bond(s). It depends on Fe cation as a cofactor. Characteristic constituent of osteoclasts and some mononuclear preosteoclasts. Preferentially expressed in skeletal tissues.

The protein resides in the lysosome. It catalyses the reaction a phosphate monoester + H2O = an alcohol + phosphate. In terms of biological role, may play a role in the process of bone resorption. The osteoclastic trap acts on nucleotide tri- and diphosphates with higher affinity, compared with other substrates. The polypeptide is Tartrate-resistant acid phosphatase type 5 (Acp5) (Rattus norvegicus (Rat)).